A 233-amino-acid chain; its full sequence is MAEKATSLFLRAMEISEKQSFDVMRRNSSCTIRHLSSCGILETRRVSLPPPPSASSQMVPSRSFINLTAPLIMRRMEYSESRSINYSPEQMYDVVANVEQYQQFVPWCKKSKVTRGRNGDMRAQLEIGFPPIVERYTSEVTVIPNHQVRAVCTDGSLFNHLETLWRFTPGAAGQSCNVEFFVTFEFKSLLHSQLATMFFDEVVKQMVNAFETRAKKLYGTGVHRQQASLRRAI.

The N-terminal 34 residues, methionine 1–histidine 34, are a transit peptide targeting the mitochondrion.

The protein belongs to the COQ10 family. As to quaternary structure, interacts with coenzyme Q.

The protein resides in the mitochondrion inner membrane. Functionally, required for the function of coenzyme Q in the respiratory chain. May serve as a chaperone or may be involved in the transport of Q6 from its site of synthesis to the catalytic sites of the respiratory complexes. This chain is Coenzyme Q-binding protein COQ10 homolog, mitochondrial, found in Danio rerio (Zebrafish).